The following is a 160-amino-acid chain: Non-secretory ribonuclease (160 aa).

The N-terminal stretch at 1–27 is a signal peptide; that stretch reads MVPKLFTSPICLLLLLGLMGVEGSLHA. C-linked (Man) tryptophan glycosylation is present at tryptophan 34. Histidine 42 acts as the Proton acceptor in catalysis. Residue asparagine 44 is glycosylated (N-linked (GlcNAc...) asparagine). 4 cysteine pairs are disulfide-bonded: cysteine 50–cysteine 110, cysteine 64–cysteine 122, cysteine 82–cysteine 137, and cysteine 89–cysteine 98. At tyrosine 60 the chain carries 3'-nitrotyrosine. Substrate is bound at residue 65–69; that stretch reads KNQNT. 4 N-linked (GlcNAc...) asparagine glycosylation sites follow: asparagine 92, asparagine 111, asparagine 118, and asparagine 138. Catalysis depends on histidine 155, which acts as the Proton donor.

The protein belongs to the pancreatic ribonuclease family. In terms of assembly, interacts with and forms a tight 1:1 complex with RNH1. Dimerization of two such complexes may occur.

The protein resides in the lysosome. It is found in the cytoplasmic granule. The enzyme catalyses an [RNA] containing cytidine + H2O = an [RNA]-3'-cytidine-3'-phosphate + a 5'-hydroxy-ribonucleotide-3'-[RNA].. It carries out the reaction an [RNA] containing uridine + H2O = an [RNA]-3'-uridine-3'-phosphate + a 5'-hydroxy-ribonucleotide-3'-[RNA].. Its function is as follows. This is a non-secretory ribonuclease. It is a pyrimidine specific nuclease with a slight preference for U. Cytotoxin and helminthotoxin. Possesses a wide variety of biological activities. The polypeptide is Non-secretory ribonuclease (RNASE2) (Chlorocebus aethiops (Green monkey)).